Here is a 511-residue protein sequence, read N- to C-terminus: Thioredoxin reductase 2, mitochondrial (511 aa).

The transit peptide at Met1 to Gly21 directs the protein to the mitochondrion. Asp29 to Tyr58 contacts FAD. A disulfide bond links Cys74 and Cys79. The residue at position 316 (Lys316) is an N6-succinyllysine. The Proton acceptor role is filled by His484. The segment at residues Cys509 to Sec510 is a cross-link (cysteinyl-selenocysteine (Cys-Sec)). A non-standard amino acid (selenocysteine) is located at residue Sec510.

The protein belongs to the class-I pyridine nucleotide-disulfide oxidoreductase family. As to quaternary structure, homodimer. It depends on FAD as a cofactor.

It is found in the mitochondrion. It carries out the reaction [thioredoxin]-dithiol + NADP(+) = [thioredoxin]-disulfide + NADPH + H(+). Its activity is regulated as follows. Inhibited by 1-chloro-2,4-dinitrobenzene and by zinc, calcium, magnesium and Fe(2+) ions. Involved in the control of reactive oxygen species levels and the regulation of mitochondrial redox homeostasis. Maintains thioredoxin in a reduced state. May play a role in redox-regulated cell signaling. This is Thioredoxin reductase 2, mitochondrial (TXNRD2) from Bos taurus (Bovine).